Reading from the N-terminus, the 760-residue chain is Transferrin receptor protein 1 (760 aa).

Residues 1-65 are Cytoplasmic-facing; the sequence is MMDQARSAFS…VTKPKRCGGS (65 aa). Positions 1–67 are mediates interaction with SH3BP4; that stretch reads MMDQARSAFS…KPKRCGGSIC (67 aa). Phosphoserine is present on residues Ser10 and Ser19. A Phosphotyrosine modification is found at Tyr20. The Endocytosis signal signature appears at 20–23; the sequence is YTRF. A Phosphothreonine modification is found at Thr21. Phosphoserine is present on Ser24. The Stop-transfer sequence motif lies at 58-61; sequence KPKR. S-palmitoyl cysteine attachment occurs at residues Cys62 and Cys67. A helical; Signal-anchor for type II membrane protein membrane pass occupies residues 66-86; it reads ICYGTIAVIIFFLIGFMIGYL. The Extracellular portion of the chain corresponds to 87–760; sequence GYCKGVEPKT…GDVWDIDNEF (674 aa). Residues 223–313 enclose the PA domain; the sequence is SKAATVTGKL…GTGDPYTPGF (91 aa). Residues Asn251 and Asn317 are each glycosylated (N-linked (GlcNAc...) asparagine). The interval 569 to 760 is ligand-binding; that stretch reads TMDTYKELTE…GDVWDIDNEF (192 aa). A Cell attachment site motif is present at residues 646-648; sequence RGD. 2 N-linked (GlcNAc...) asparagine glycosylation sites follow: Asn722 and Asn727.

Belongs to the peptidase M28 family. M28B subfamily. In terms of assembly, homodimer; disulfide-linked. Binds one transferrin or HFE molecule per subunit. Interacts with SH3BP4. Interacts with STEAP3; facilitates TFRC endocytosis in erythroid precursor cells. Post-translationally, stearoylated by ZDHHC6 which inhibits TFRC-mediated activation of the JNK pathway and promotes mitochondrial fragmentation. Stearoylation does not affect iron uptake.

Its subcellular location is the cell membrane. The protein resides in the melanosome. Its function is as follows. Cellular uptake of iron occurs via receptor-mediated endocytosis of ligand-occupied transferrin receptor into specialized endosomes. Endosomal acidification leads to iron release. The apotransferrin-receptor complex is then recycled to the cell surface with a return to neutral pH and the concomitant loss of affinity of apotransferrin for its receptor. Transferrin receptor is necessary for development of erythrocytes and the nervous system. Positively regulates T and B cell proliferation through iron uptake. Acts as a lipid sensor that regulates mitochondrial fusion by regulating activation of the JNK pathway. When dietary levels of stearate (C18:0) are low, promotes activation of the JNK pathway, resulting in HUWE1-mediated ubiquitination and subsequent degradation of the mitofusin MFN2 and inhibition of mitochondrial fusion. When dietary levels of stearate (C18:0) are high, TFRC stearoylation inhibits activation of the JNK pathway and thus degradation of the mitofusin MFN2. Mediates uptake of NICOL1 into fibroblasts where it may regulate extracellular matrix production. The protein is Transferrin receptor protein 1 (TFRC) of Pongo abelii (Sumatran orangutan).